Reading from the N-terminus, the 425-residue chain is Serine--tRNA ligase 2 (425 aa).

234 to 236 (TAE) lines the L-serine pocket. 265-267 (RVE) is an ATP binding site. Glutamate 288 provides a ligand contact to L-serine. An ATP-binding site is contributed by 352-355 (EVSS). Residue serine 388 coordinates L-serine.

The protein belongs to the class-II aminoacyl-tRNA synthetase family. Type-1 seryl-tRNA synthetase subfamily. Homodimer. The tRNA molecule binds across the dimer.

The protein localises to the cytoplasm. It catalyses the reaction tRNA(Ser) + L-serine + ATP = L-seryl-tRNA(Ser) + AMP + diphosphate + H(+). The enzyme catalyses tRNA(Sec) + L-serine + ATP = L-seryl-tRNA(Sec) + AMP + diphosphate + H(+). It functions in the pathway aminoacyl-tRNA biosynthesis; selenocysteinyl-tRNA(Sec) biosynthesis; L-seryl-tRNA(Sec) from L-serine and tRNA(Sec): step 1/1. Catalyzes the attachment of serine to tRNA(Ser). Is also able to aminoacylate tRNA(Sec) with serine, to form the misacylated tRNA L-seryl-tRNA(Sec), which will be further converted into selenocysteinyl-tRNA(Sec). In Clostridium acetobutylicum (strain ATCC 824 / DSM 792 / JCM 1419 / IAM 19013 / LMG 5710 / NBRC 13948 / NRRL B-527 / VKM B-1787 / 2291 / W), this protein is Serine--tRNA ligase 2.